The sequence spans 199 residues: Ribonuclease HII (199 aa).

The region spanning 10–199 (RIEAGCDEAG…LLPEQLTLGF (190 aa)) is the RNase H type-2 domain. A divalent metal cation is bound by residues aspartate 16, glutamate 17, and aspartate 108.

It belongs to the RNase HII family. Mn(2+) serves as cofactor. It depends on Mg(2+) as a cofactor.

The protein resides in the cytoplasm. It carries out the reaction Endonucleolytic cleavage to 5'-phosphomonoester.. Functionally, endonuclease that specifically degrades the RNA of RNA-DNA hybrids. This chain is Ribonuclease HII, found in Parabacteroides distasonis (strain ATCC 8503 / DSM 20701 / CIP 104284 / JCM 5825 / NCTC 11152).